The primary structure comprises 81 residues: Ferredoxin (81 aa).

The 29-residue stretch at 2–30 folds into the 4Fe-4S ferredoxin-type domain; sequence KYTIVDKETCIACGACGAAAPDIYDYDED. Residues C11, C14, C17, and C61 each contribute to the [4Fe-4S] cluster site.

[4Fe-4S] cluster is required as a cofactor.

Functionally, ferredoxins are iron-sulfur proteins that transfer electrons in a wide variety of metabolic reactions. This chain is Ferredoxin (fer), found in Geobacillus stearothermophilus (Bacillus stearothermophilus).